We begin with the raw amino-acid sequence, 214 residues long: CASP-like protein UU5 (214 aa).

Positions 1 to 20 are disordered; sequence MSTVAQDSAPGGGKIQDAME. The Cytoplasmic segment spans residues 1–57; sequence MSTVAQDSAPGGGKIQDAMEQGAPGASSAAVVPEGGHYTQTPSPAFQAVKKNINHMS. Residues 58 to 78 traverse the membrane as a helical segment; it reads AFSLGLRVAEFVLSVIAFSLM. Residues 79–99 lie on the Extracellular side of the membrane; it reads ASADQNGAVYSTFTSYSFVLA. A helical membrane pass occupies residues 100-120; it reads VNVLVVFYTIGQIIMSVLLLV. Residues 121–138 lie on the Cytoplasmic side of the membrane; that stretch reads SGSTPKKIYLFITFGCDQ. The chain crosses the membrane as a helical span at residues 139-159; that stretch reads LSAFLLMAAGAAGASVALIIN. The Extracellular portion of the chain corresponds to 160–193; it reads RGGVTDAYGNGCIDGKITSFCSHAQASVAFTFLS. A helical membrane pass occupies residues 194–214; sequence FFCMVISSLLGVYSLAPYLIL.

Belongs to the Casparian strip membrane proteins (CASP) family. As to quaternary structure, homodimer and heterodimers.

It is found in the cell membrane. This Physcomitrium patens (Spreading-leaved earth moss) protein is CASP-like protein UU5.